Consider the following 195-residue polypeptide: Ras-related protein Rab-31 (195 aa).

Residues G16, G18, K19, S20, S21, D32, and H33 each contribute to the GTP site. S20 is a Mg(2+) binding site. 2 consecutive short sequence motifs (switch) follow at residues 30–42 (HFDH…IGAS) and 63–79 (AGQE…YRGS). The residue at position 36 (S36) is a Phosphoserine. GTP-binding residues include T38, G64, N119, D122, A150, and K151. Residue T38 coordinates Mg(2+). The interval 168–195 (PPLGPQENGNSGGIKLGNQSLQASRRCC) is disordered. Positions 184-195 (GNQSLQASRRCC) are enriched in polar residues. Residues C194 and C195 are each lipidated (S-geranylgeranyl cysteine).

This sequence belongs to the small GTPase superfamily. Rab family. Interacts with OCRL. Interacts (in GDP-bound form) with RIN3 and GAPVD1, which function as guanine exchange factors (GEF). Interacts with EGFR. Interacts with NGFR. Interacts (in GTP-bound form) with EEA1. Interacts (in GTP-bound form) with APPL2; interaction contributes to or enhances recruitment of APPL2 to the phagosomes; interaction enhances Fc-gamma receptor-mediated phagocytosis through PI3K/Akt signaling in macrophages. Mg(2+) serves as cofactor. Detected in brain astrocytes (at protein level).

The protein localises to the early endosome. The protein resides in the golgi apparatus. Its subcellular location is the trans-Golgi network. It localises to the trans-Golgi network membrane. It is found in the cytoplasmic vesicle. The protein localises to the phagosome. The protein resides in the phagosome membrane. It carries out the reaction GTP + H2O = GDP + phosphate + H(+). Regulated by guanine nucleotide exchange factors (GEFs) including RIN3 and GAPVD1 which promote the exchange of bound GDP for free GTP. Regulated by GTPase activating proteins (GAPs) which increase the GTP hydrolysis activity. Inhibited by GDP dissociation inhibitors (GDIs) which prevent Rab-GDP dissociation. The small GTPases Rab are key regulators of intracellular membrane trafficking, from the formation of transport vesicles to their fusion with membranes. Rabs cycle between an inactive GDP-bound form and an active GTP-bound form that is able to recruit to membranes different set of downstream effectors directly responsible for vesicle formation, movement, tethering and fusion. Required for the integrity and for normal function of the Golgi apparatus and the trans-Golgi network. Plays a role in insulin-stimulated translocation of GLUT4 to the cell membrane. Plays a role in the maturation of phagosomes that engulf pathogens, such as S.aureus and Mycobacterium. Plays a role in M6PR transport from the trans-Golgi network to endosomes. Plays a role in the internalization of EGFR from the cell membrane into endosomes. In Mus musculus (Mouse), this protein is Ras-related protein Rab-31.